Reading from the N-terminus, the 329-residue chain is Tryptophan--tRNA ligase (329 aa).

ATP is bound by residues Gln-9–Ser-11 and Gly-17–Asn-18. The short motif at Pro-10–Asn-18 is the 'HIGH' region element. Asp-133 provides a ligand contact to L-tryptophan. Residues Gly-145–Asp-147, Val-184, and Lys-193–Ser-197 each bind ATP. Residues Lys-193–Ser-197 carry the 'KMSKS' region motif.

Belongs to the class-I aminoacyl-tRNA synthetase family. As to quaternary structure, homodimer.

It is found in the cytoplasm. The enzyme catalyses tRNA(Trp) + L-tryptophan + ATP = L-tryptophyl-tRNA(Trp) + AMP + diphosphate + H(+). Its function is as follows. Catalyzes the attachment of tryptophan to tRNA(Trp). This is Tryptophan--tRNA ligase from Staphylococcus aureus (strain MSSA476).